We begin with the raw amino-acid sequence, 216 residues long: Orotate phosphoribosyltransferase (216 aa).

Lys-30 serves as a coordination point for 5-phospho-alpha-D-ribose 1-diphosphate. 38–39 (FF) is a binding site for orotate. Residues 75 to 76 (YK), Arg-102, Lys-103, Lys-106, His-108, and 128 to 136 (DDVITAGTA) contribute to the 5-phospho-alpha-D-ribose 1-diphosphate site. Residues Thr-132 and Arg-160 each contribute to the orotate site.

It belongs to the purine/pyrimidine phosphoribosyltransferase family. PyrE subfamily. Homodimer. It depends on Mg(2+) as a cofactor.

The enzyme catalyses orotidine 5'-phosphate + diphosphate = orotate + 5-phospho-alpha-D-ribose 1-diphosphate. It functions in the pathway pyrimidine metabolism; UMP biosynthesis via de novo pathway; UMP from orotate: step 1/2. In terms of biological role, catalyzes the transfer of a ribosyl phosphate group from 5-phosphoribose 1-diphosphate to orotate, leading to the formation of orotidine monophosphate (OMP). The sequence is that of Orotate phosphoribosyltransferase from Acinetobacter baylyi (strain ATCC 33305 / BD413 / ADP1).